Reading from the N-terminus, the 447-residue chain is Alpha-1,3-mannosyl-glycoprotein 2-beta-N-acetylglucosaminyltransferase (447 aa).

The Cytoplasmic segment spans residues 1–6; sequence MLKKQT. Residues 7–29 form a helical; Signal-anchor for type II membrane protein membrane-spanning segment; it reads AGLVLWGAIIFVGWNALLLLFFW. The Lumenal segment spans residues 30–447; that stretch reads TRPAPGRLPS…TWTGYDPSWN (418 aa). The cysteines at positions 115 and 145 are disulfide-linked. Residues Arg117, Asp144, His190, and Asp212 each contribute to the substrate site. Asp213 is a Mn(2+) binding site. A disulfide bond links Cys239 and Cys305. Asp291 functions as the Proton acceptor in the catalytic mechanism. A substrate-binding site is contributed by Ser322.

It belongs to the glycosyltransferase 13 family. As to quaternary structure, interacts with MGAT4D. Interacts with BRI3. Mn(2+) is required as a cofactor. In terms of tissue distribution, detected in kidney, liver and brain.

It localises to the golgi apparatus membrane. The protein resides in the cytoplasm. It is found in the perinuclear region. It catalyses the reaction N(4)-(alpha-D-Man-(1-&gt;3)-[alpha-D-Man-(1-&gt;3)-[alpha-D-Man-(1-&gt;6)]-alpha-D-Man-(1-&gt;6)]-beta-D-Man-(1-&gt;4)-beta-D-GlcNAc-(1-&gt;4)-beta-D-GlcNAc)-L-asparaginyl-[protein] (N-glucan mannose isomer 5A1,2) + UDP-N-acetyl-alpha-D-glucosamine = N(4)-{beta-D-GlcNAc-(1-&gt;2)-alpha-D-Man-(1-&gt;3)-[alpha-D-Man-(1-&gt;3)-[alpha-D-Man-(1-&gt;6)]-alpha-D-Man-(1-&gt;6)]-beta-D-Man-(1-&gt;4)-beta-D-GlcNAc-(1-&gt;4)-beta-D-GlcNAc}-L-asparaginyl-[protein] + UDP + H(+). It participates in protein modification; protein glycosylation. In terms of biological role, initiates complex N-linked carbohydrate formation. Essential for the conversion of high-mannose to hybrid and complex N-glycans. This chain is Alpha-1,3-mannosyl-glycoprotein 2-beta-N-acetylglucosaminyltransferase (Mgat1), found in Mus musculus (Mouse).